The chain runs to 635 residues: Transcription termination factor FttA (635 aa).

KHa regions lie at residues 1-69 (MSAE…PSVL) and 4-69 (EDIL…PSVL). The tract at residues 70 to 137 (VEPDIAKDKI…WAPKPVRTPP (68 aa)) is KHb. Metallo-beta-lactamase N-terminus stretches follow at residues 179–382 (WVRT…YGGY) and 179–383 (WVRT…GGYD). 2 beta-Casp regions span residues 180–577 (VRTS…GFSG) and 383–576 (DDVL…EGFS). Residues H241, H243, D245, H246, H328, and D351 each coordinate Zn(2+). Metallo-beta-lactamase C-terminus stretches follow at residues 577 to 635 (GHSD…IRLR) and 578 to 635 (HSDR…IRLR). H602 is a binding site for Zn(2+).

The protein belongs to the metallo-beta-lactamase superfamily. RNA-metabolizing metallo-beta-lactamase-like family. FttA subfamily. As to quaternary structure, homodimer. Interacts with RNA polymerase (RNAP); interaction is not dependent on DNA or RNA. Interacts with the Spt4-Spt5 complex. It depends on Zn(2+) as a cofactor.

The protein localises to the chromosome. Terminates transcription on the whole genome. Termination is linked to FttA-mediated RNA cleavage and does not require NTP hydrolysis. Cleaves endonucleolytically at the RNA exit channel of RNA polymerase (RNAP); the 5'-3' exonuclease activity of this protein degrades the nascent RNA released from RNAP. Functionally, terminates transcription genome-wide. Transcription termination is most effective in vivo on RNAs with more than one U4-tract in their 3'-ends (including non-protein coding RNAs); U4-tracts are recognized by this protein. Also plays a role in termination of RNAs without U-tracts by an unknown mechanism. Has endonuclease activity after U-rich tracts in transcription termination sites. Binds RNA at U4-tracts found directly upstream of the experimentally determined transcription termination sites; binds preferentially to RNAs with more U4-tracts at their 3'-ends. The polypeptide is Transcription termination factor FttA (Methanococcus maripaludis (strain DSM 14266 / JCM 13030 / NBRC 101832 / S2 / LL)).